A 146-amino-acid polypeptide reads, in one-letter code: Large ribosomal subunit protein uL13 (146 aa).

It belongs to the universal ribosomal protein uL13 family. Part of the 50S ribosomal subunit.

In terms of biological role, this protein is one of the early assembly proteins of the 50S ribosomal subunit, although it is not seen to bind rRNA by itself. It is important during the early stages of 50S assembly. In Malacoplasma penetrans (strain HF-2) (Mycoplasma penetrans), this protein is Large ribosomal subunit protein uL13.